The sequence spans 385 residues: ATP synthase subunit a-1 (385 aa).

Positions 1 to 133 are excised as a propeptide; the sequence is MRRIFLFDEN…ALNIVGQAAA (133 aa). The next 7 helical transmembrane spans lie at 154–174, 220–240, 249–269, 276–296, 316–336, 339–359, and 362–382; these read FSFT…LLLI, FFPC…QGMI, HFLI…IVGF, FFSF…LVLL, MMAG…MLCM, IFYF…TGLE, and VAIL…NDAI.

Belongs to the ATPase A chain family. F-type ATPases have 2 components, CF(1) - the catalytic core - and CF(0) - the membrane proton channel. CF(1) has five subunits: alpha(3), beta(3), gamma(1), delta(1), epsilon(1). CF(0) has three main subunits: a, b and c.

Its subcellular location is the mitochondrion inner membrane. Functionally, mitochondrial membrane ATP synthase (F(1)F(0) ATP synthase or Complex V) produces ATP from ADP in the presence of a proton gradient across the membrane which is generated by electron transport complexes of the respiratory chain. F-type ATPases consist of two structural domains, F(1) - containing the extramembraneous catalytic core and F(0) - containing the membrane proton channel, linked together by a central stalk and a peripheral stalk. During catalysis, ATP synthesis in the catalytic domain of F(1) is coupled via a rotary mechanism of the central stalk subunits to proton translocation. Key component of the proton channel; it may play a direct role in the translocation of protons across the membrane. The sequence is that of ATP synthase subunit a-1 (ATP6-1) from Arabidopsis thaliana (Mouse-ear cress).